Here is a 497-residue protein sequence, read N- to C-terminus: ADP-dependent glucokinase (497 aa).

Residues 1 to 22 form the signal peptide; the sequence is MALWRGSAYAGFLALAVGCVFL. Positions 52–497 constitute an ADPK domain; sequence SPEGRLAAAW…LFYSEVHPHY (446 aa). Mg(2+)-binding residues include Glu-297, Glu-328, and Asp-481. Asp-481 functions as the Proton acceptor in the catalytic mechanism.

This sequence belongs to the ADP-dependent glucokinase family. Monomer. The cofactor is Mg(2+).

The protein localises to the secreted. It catalyses the reaction D-glucose + ADP = D-glucose 6-phosphate + AMP + H(+). It participates in carbohydrate degradation; glycolysis. Catalyzes the phosphorylation of D-glucose to D-glucose 6-phosphate using ADP as the phosphate donor. GDP and CDP can replace ADP, but with reduced efficiency. This Homo sapiens (Human) protein is ADP-dependent glucokinase (ADPGK).